The following is a 426-amino-acid chain: 4-hydroxy-3-methylbut-2-en-1-yl diphosphate synthase (flavodoxin) (426 aa).

The [4Fe-4S] cluster site is built by Cys-320, Cys-323, Cys-366, and Glu-373.

Belongs to the IspG family. [4Fe-4S] cluster is required as a cofactor.

The enzyme catalyses (2E)-4-hydroxy-3-methylbut-2-enyl diphosphate + oxidized [flavodoxin] + H2O + 2 H(+) = 2-C-methyl-D-erythritol 2,4-cyclic diphosphate + reduced [flavodoxin]. It participates in isoprenoid biosynthesis; isopentenyl diphosphate biosynthesis via DXP pathway; isopentenyl diphosphate from 1-deoxy-D-xylulose 5-phosphate: step 5/6. Its function is as follows. Converts 2C-methyl-D-erythritol 2,4-cyclodiphosphate (ME-2,4cPP) into 1-hydroxy-2-methyl-2-(E)-butenyl 4-diphosphate. In Wolbachia sp. subsp. Drosophila simulans (strain wRi), this protein is 4-hydroxy-3-methylbut-2-en-1-yl diphosphate synthase (flavodoxin).